Here is a 118-residue protein sequence, read N- to C-terminus: UPF0342 protein Hore_03100 (118 aa).

The protein belongs to the UPF0342 family.

This Halothermothrix orenii (strain H 168 / OCM 544 / DSM 9562) protein is UPF0342 protein Hore_03100.